Reading from the N-terminus, the 211-residue chain is Probable nicotinate-nucleotide adenylyltransferase (211 aa).

It belongs to the NadD family.

The catalysed reaction is nicotinate beta-D-ribonucleotide + ATP + H(+) = deamido-NAD(+) + diphosphate. The protein operates within cofactor biosynthesis; NAD(+) biosynthesis; deamido-NAD(+) from nicotinate D-ribonucleotide: step 1/1. Functionally, catalyzes the reversible adenylation of nicotinate mononucleotide (NaMN) to nicotinic acid adenine dinucleotide (NaAD). The polypeptide is Probable nicotinate-nucleotide adenylyltransferase (Gemmatimonas aurantiaca (strain DSM 14586 / JCM 11422 / NBRC 100505 / T-27)).